Consider the following 317-residue polypeptide: Ribosomal RNA small subunit methyltransferase H (317 aa).

S-adenosyl-L-methionine-binding positions include 30-32 (GGH), aspartate 50, tyrosine 78, aspartate 95, and glutamine 102.

The protein belongs to the methyltransferase superfamily. RsmH family.

Its subcellular location is the cytoplasm. The enzyme catalyses cytidine(1402) in 16S rRNA + S-adenosyl-L-methionine = N(4)-methylcytidine(1402) in 16S rRNA + S-adenosyl-L-homocysteine + H(+). Its function is as follows. Specifically methylates the N4 position of cytidine in position 1402 (C1402) of 16S rRNA. The sequence is that of Ribosomal RNA small subunit methyltransferase H from Nitrosomonas eutropha (strain DSM 101675 / C91 / Nm57).